Here is a 231-residue protein sequence, read N- to C-terminus: Octanoyl-[acyl-carrier-protein]:protein N-octanoyltransferase LIPT2, mitochondrial (231 aa).

A mitochondrion-targeting transit peptide spans 1–31; the sequence is MRQPAVRLVRLGRVPYAELLGLQDRWLRRLQ. Positions 41–224 constitute a BPL/LPL catalytic domain; it reads GTEAGALLLC…AFKEIYKCTL (184 aa). Substrate contacts are provided by residues 85 to 92, 154 to 156, and 167 to 169; these read RGGLATFH, AIG, and GLA. Cysteine 185 acts as the Acyl-thioester intermediate in catalysis.

The protein belongs to the LipB family.

It is found in the mitochondrion. The enzyme catalyses octanoyl-[ACP] + L-lysyl-[protein] = N(6)-octanoyl-L-lysyl-[protein] + holo-[ACP] + H(+). Its pathway is protein modification; protein lipoylation via endogenous pathway; protein N(6)-(lipoyl)lysine from octanoyl-[acyl-carrier-protein]: step 1/2. In terms of biological role, catalyzes the transfer of endogenously produced octanoic acid from octanoyl-acyl-carrier-protein (octanoyl-ACP) onto the lipoyl domains of lipoate-dependent enzymes such as the protein H of the glycine cleavage system (GCSH). Lipoyl-ACP can also act as a substrate although octanoyl-ACP is likely to be the physiological substrate. In Homo sapiens (Human), this protein is Octanoyl-[acyl-carrier-protein]:protein N-octanoyltransferase LIPT2, mitochondrial.